A 242-amino-acid chain; its full sequence is Small ribosomal subunit protein uS2 (242 aa).

The protein belongs to the universal ribosomal protein uS2 family.

The chain is Small ribosomal subunit protein uS2 from Shewanella amazonensis (strain ATCC BAA-1098 / SB2B).